Consider the following 360-residue polypeptide: UDP-N-acetylglucosamine--N-acetylmuramyl-(pentapeptide) pyrophosphoryl-undecaprenol N-acetylglucosamine transferase (360 aa).

Residues S198 and Q289 each coordinate UDP-N-acetyl-alpha-D-glucosamine.

It belongs to the glycosyltransferase 28 family. MurG subfamily.

It is found in the cell membrane. It carries out the reaction Mur2Ac(oyl-L-Ala-gamma-D-Glu-L-Lys-D-Ala-D-Ala)-di-trans,octa-cis-undecaprenyl diphosphate + UDP-N-acetyl-alpha-D-glucosamine = beta-D-GlcNAc-(1-&gt;4)-Mur2Ac(oyl-L-Ala-gamma-D-Glu-L-Lys-D-Ala-D-Ala)-di-trans,octa-cis-undecaprenyl diphosphate + UDP + H(+). Its pathway is cell wall biogenesis; peptidoglycan biosynthesis. In terms of biological role, cell wall formation. Catalyzes the transfer of a GlcNAc subunit on undecaprenyl-pyrophosphoryl-MurNAc-pentapeptide (lipid intermediate I) to form undecaprenyl-pyrophosphoryl-MurNAc-(pentapeptide)GlcNAc (lipid intermediate II). The protein is UDP-N-acetylglucosamine--N-acetylmuramyl-(pentapeptide) pyrophosphoryl-undecaprenol N-acetylglucosamine transferase of Streptococcus pyogenes serotype M49 (strain NZ131).